The chain runs to 591 residues: Metalloendopeptidase OPG085 (591 aa).

H41 provides a ligand contact to Zn(2+). E44 is a catalytic residue. H45 and E112 together coordinate Zn(2+).

Belongs to the peptidase M44 family. Requires Zn(2+) as cofactor. In terms of processing, undergoes proteolytic processing during the course of infection. May be cleaved into 46 kDa and 22 kDa products (Potential).

Its subcellular location is the virion. Its function is as follows. Probably involved in maturation of some viral proteins by processing them preferentially at Ala-Gly-|-Ser/Thr/Lys motifs. Does not seem to be responsible for the cleavage of major core proteins. In Homo sapiens (Human), this protein is Metalloendopeptidase OPG085 (OPG085).